A 168-amino-acid chain; its full sequence is Plastocyanin B, chloroplastic (168 aa).

Residues 1–69 constitute a chloroplast transit peptide; the sequence is MAAVTSAAVS…SAMIASNAMA (69 aa). Residues 70–168 enclose the Plastocyanin-like domain; sequence VDVLLGADDG…AGMVGKVIVN (99 aa). Cu cation contacts are provided by H106, C153, H156, and M161.

It belongs to the plastocyanin family. The cofactor is Cu(2+).

The protein resides in the plastid. Its subcellular location is the chloroplast thylakoid membrane. Its function is as follows. Participates in electron transfer between P700 and the cytochrome b6-f complex in photosystem I. The protein is Plastocyanin B, chloroplastic (PETE) of Populus nigra (Lombardy poplar).